The sequence spans 153 residues: Interleukin-4 (153 aa).

Positions 1–24 (MGLTSQLLPPLFFLLACAGNFVHG) are cleaved as a signal peptide. Intrachain disulfides connect C27–C151, C48–C89, and C70–C123. N-linked (GlcNAc...) asparagine glycosylation is present at N62.

It belongs to the IL-4/IL-13 family.

The protein resides in the secreted. Participates in at least several B-cell activation processes as well as of other cell types. It is a costimulator of DNA-synthesis. It induces the expression of class II MHC molecules on resting B-cells. It enhances both secretion and cell surface expression of IgE and IgG1. It also regulates the expression of the low affinity Fc receptor for IgE (CD23) on both lymphocytes and monocytes. Positively regulates IL31RA expression in macrophages. Stimulates autophagy in dendritic cells by interfering with mTORC1 signaling and through the induction of RUFY4. This Macaca fascicularis (Crab-eating macaque) protein is Interleukin-4 (IL4).